The following is a 420-amino-acid chain: Isocitrate dehydrogenase [NADP] (420 aa).

Residues 75-77 and Arg82 each bind NADP(+); that span reads TIT. A substrate-binding site is contributed by Thr77. Substrate contacts are provided by residues 94–100, Arg109, and Arg132; that span reads SPNGTIR. Asp252 is a Mn(2+) binding site. Lys260 serves as a coordination point for NADP(+). Asp275 is a binding site for Mn(2+). Residues 310 to 315 and Asn328 contribute to the NADP(+) site; that span reads GTVTRH.

Belongs to the isocitrate and isopropylmalate dehydrogenases family. It depends on Mg(2+) as a cofactor. Requires Mn(2+) as cofactor.

The enzyme catalyses D-threo-isocitrate + NADP(+) = 2-oxoglutarate + CO2 + NADPH. Functionally, may function in the production of NADPH for fatty acid and sterol synthesis. The protein is Isocitrate dehydrogenase [NADP] (IDP3) of Saccharomyces cerevisiae (strain ATCC 204508 / S288c) (Baker's yeast).